Reading from the N-terminus, the 544-residue chain is CTP synthase (544 aa).

Residues 1–265 are amidoligase domain; it reads MTKFIFVTGG…DNIITEQLQL (265 aa). Position 13 (Ser-13) interacts with CTP. Position 13 (Ser-13) interacts with UTP. Residues 14 to 19 and Asp-71 contribute to the ATP site; that span reads SLGKGI. Positions 71 and 139 each coordinate Mg(2+). CTP is bound by residues 146–148, 186–191, and Lys-222; these read DIE and KTKPTQ. Residues 186-191 and Lys-222 contribute to the UTP site; that span reads KTKPTQ. The Glutamine amidotransferase type-1 domain occupies 290–544; that stretch reads KIAMVGKYVD…VKAALNNKKA (255 aa). Gly-353 is a binding site for L-glutamine. The Nucleophile; for glutamine hydrolysis role is filled by Cys-380. Residues 381-384, Glu-404, and Arg-471 each bind L-glutamine; that span reads LGMQ. Residues His-517 and Glu-519 contribute to the active site.

The protein belongs to the CTP synthase family. In terms of assembly, homotetramer.

It carries out the reaction UTP + L-glutamine + ATP + H2O = CTP + L-glutamate + ADP + phosphate + 2 H(+). The catalysed reaction is L-glutamine + H2O = L-glutamate + NH4(+). It catalyses the reaction UTP + NH4(+) + ATP = CTP + ADP + phosphate + 2 H(+). It functions in the pathway pyrimidine metabolism; CTP biosynthesis via de novo pathway; CTP from UDP: step 2/2. With respect to regulation, allosterically activated by GTP, when glutamine is the substrate; GTP has no effect on the reaction when ammonia is the substrate. The allosteric effector GTP functions by stabilizing the protein conformation that binds the tetrahedral intermediate(s) formed during glutamine hydrolysis. Inhibited by the product CTP, via allosteric rather than competitive inhibition. Catalyzes the ATP-dependent amination of UTP to CTP with either L-glutamine or ammonia as the source of nitrogen. Regulates intracellular CTP levels through interactions with the four ribonucleotide triphosphates. This Neisseria gonorrhoeae (strain ATCC 700825 / FA 1090) protein is CTP synthase.